The primary structure comprises 800 residues: Fibroblast growth factor receptor 3 (800 aa).

Positions 1–20 (MVPLCLLLYLATLVFPPVYS) are cleaved as a signal peptide. In terms of domain architecture, Ig-like C2-type 1 spans 21–122 (AHLLSPEPTD…YTVKVIDSLS (102 aa)). Over 21-363 (AHLLSPEPTD…EMEREDDYAD (343 aa)) the chain is Extracellular. A disulfide bridge links Cys55 with Cys101. Asn77, Asn90, and Asn112 each carry an N-linked (GlcNAc...) asparagine glycan. The span at 124 to 136 (GDDEDYDEDEDEA) shows a compositional bias: acidic residues. Residues 124 to 143 (GDDEDYDEDEDEAGNGNAEA) form a disordered region. 2 Ig-like C2-type domains span residues 144–237 (PYWT…YQLD) and 246–348 (PILQ…AWLT). An intrachain disulfide couples Cys169 to Cys221. Asn218, Asn255, Asn287, Asn308, and Asn321 each carry an N-linked (GlcNAc...) asparagine glycan. Residues Cys268 and Cys332 are joined by a disulfide bond. Residues 364–384 (ILIYVTSCVLFILTMVIIILC) form a helical membrane-spanning segment. Over 385-800 (RMWINTQKTL…HHHSNGVIRT (416 aa)) the chain is Cytoplasmic. Residues 460 to 739 (LTLGKPLGEG…RQLVEDHDRV (280 aa)) enclose the Protein kinase domain. ATP-binding positions include 466–474 (LGEGCFGQV) and Lys496. Asp605 (proton acceptor) is an active-site residue. Phosphotyrosine; by autocatalysis occurs at positions 635, 636, 712, and 748. Over residues 764-773 (DSNSTCSSGD) the composition is skewed to polar residues. The segment at 764–800 (DSNSTCSSGDDSVFAHDPLPEEPCLPKHHHSNGVIRT) is disordered.

It belongs to the protein kinase superfamily. Tyr protein kinase family. Fibroblast growth factor receptor subfamily. As to quaternary structure, monomer. Homodimer after ligand binding. Autophosphorylated. Binding of FGF family members together with heparan sulfate proteoglycan or heparin promotes receptor dimerization and autophosphorylation on tyrosine residues. Autophosphorylation occurs in trans between the two FGFR molecules present in the dimer.

It is found in the cell membrane. It catalyses the reaction L-tyrosyl-[protein] + ATP = O-phospho-L-tyrosyl-[protein] + ADP + H(+). With respect to regulation, present in an inactive conformation in the absence of bound ligand. Ligand binding leads to dimerization and activation by autophosphorylation on tyrosine residues. Its function is as follows. Tyrosine-protein kinase that acts as a cell-surface receptor for fibroblast growth factors and plays an essential role in the regulation of cell proliferation, differentiation and apoptosis. Plays an essential role in the regulation of chondrocyte differentiation, proliferation and apoptosis, and is required for normal skeleton development. Regulates both osteogenesis and postnatal bone mineralization by osteoblasts. Promotes apoptosis in chondrocytes, but can also promote cancer cell proliferation. Phosphorylates PLCG1, CBL and FRS2. Ligand binding leads to the activation of several signaling cascades. Activation of PLCG1 leads to the production of the cellular signaling molecules diacylglycerol and inositol 1,4,5-trisphosphate. Phosphorylation of FRS2 triggers recruitment of GRB2, GAB1, PIK3R1 and SOS1, and mediates activation of RAS, MAPK1/ERK2, MAPK3/ERK1 and the MAP kinase signaling pathway, as well as of the AKT1 signaling pathway. The polypeptide is Fibroblast growth factor receptor 3 (fgfr3) (Danio rerio (Zebrafish)).